A 583-amino-acid polypeptide reads, in one-letter code: Chromosomal replication initiator protein DnaA (583 aa).

A domain I, interacts with DnaA modulators region spans residues 1-91; that stretch reads MSNSNFSIEE…KHVLKTRLDL (91 aa). The tract at residues 91-241 is domain II; it reads LSVSLAITST…SFNDGLDGES (151 aa). Positions 151-239 are disordered; it reads KAEQRDGASQ…SSSFNDGLDG (89 aa). The span at 172–182 shows a compositional bias: basic and acidic residues; sequence EAARRREHDAD. The segment at 242–458 is domain III, AAA+ region; the sequence is LLNKNYTFEN…GALIRVTAYC (217 aa). The ATP site is built by Gly-286, Gly-288, Lys-289, and Thr-290. The segment at 459–583 is domain IV, binds dsDNA; it reads ALSHEPLTVE…TQKIKSHARD (125 aa).

The protein belongs to the DnaA family. In terms of assembly, oligomerizes as a right-handed, spiral filament on DNA at oriC.

It is found in the cytoplasm. In terms of biological role, plays an essential role in the initiation and regulation of chromosomal replication. ATP-DnaA binds to the origin of replication (oriC) to initiate formation of the DNA replication initiation complex once per cell cycle. Binds the DnaA box (a 9 base pair repeat at the origin) and separates the double-stranded (ds)DNA. Forms a right-handed helical filament on oriC DNA; dsDNA binds to the exterior of the filament while single-stranded (ss)DNA is stabiized in the filament's interior. The ATP-DnaA-oriC complex binds and stabilizes one strand of the AT-rich DNA unwinding element (DUE), permitting loading of DNA polymerase. After initiation quickly degrades to an ADP-DnaA complex that is not apt for DNA replication. Binds acidic phospholipids. The chain is Chromosomal replication initiator protein DnaA from Corynebacterium jeikeium (strain K411).